The sequence spans 394 residues: MASASLLKTSPVLDNPEFLKGQTLRIPSVAGVRFTPSGSSSLTVRASSYADELVKTAKTVASPGRGILAMDESNATCGKRLASIGLENTEANRQAYRTLLISAPGLGQYVSGAILFEETLYQSTTDGKKMVDVLIEQGIVPGIKVDKGWLPLPGSNDESWCQGLDGLACRSAAYYQQGARFAKWRTVVSIPNGPSALAVKEAAWGLARYAAITQDNGLDPILEPEIMLDGEHGIDRTFRVAQQVWAEVFFNLAENNVLLEGSSLKPSMVGPGALSARKGPPEQVADYPLKLLHRRRGPVVPGIMVLSGGQSEVEATLNLNAMNQSPNPWHVSFSYARALQNTCLKTWVEGQENVKAQDFACAKSNSLAQLGKYTGEGESEERKKDMFVKATLTY.

A chloroplast-targeting transit peptide spans 1–46; the sequence is MASASLLKTSPVLDNPEFLKGQTLRIPSVAGVRFTPSGSSSLTVRA. Substrate is bound by residues Arg-93 and Lys-183. Glu-223 serves as the catalytic Proton acceptor. Lys-265 (schiff-base intermediate with dihydroxyacetone-P) is an active-site residue.

It belongs to the class I fructose-bisphosphate aldolase family.

The protein resides in the plastid. The protein localises to the chloroplast. The catalysed reaction is beta-D-fructose 1,6-bisphosphate = D-glyceraldehyde 3-phosphate + dihydroxyacetone phosphate. Its pathway is carbohydrate degradation; glycolysis; D-glyceraldehyde 3-phosphate and glycerone phosphate from D-glucose: step 4/4. The polypeptide is Fructose-bisphosphate aldolase, chloroplastic (Spinacia oleracea (Spinach)).